Consider the following 237-residue polypeptide: DNA repair protein RecO (237 aa).

It belongs to the RecO family.

Its function is as follows. Involved in DNA repair and RecF pathway recombination. This chain is DNA repair protein RecO, found in Flavobacterium johnsoniae (strain ATCC 17061 / DSM 2064 / JCM 8514 / BCRC 14874 / CCUG 350202 / NBRC 14942 / NCIMB 11054 / UW101) (Cytophaga johnsonae).